Here is a 1384-residue protein sequence, read N- to C-terminus: Sterol 3-beta-glucosyltransferase (1384 aa).

Disordered stretches follow at residues 1–64, 86–189, and 204–229; these read MPNM…DGQL, ARFD…TPRA, and DKKQ…QSCA. Residues 7-19 are compositionally biased toward basic and acidic residues; sequence LLEDAKRRVDRRL. Residues 21-36 are compositionally biased toward low complexity; it reads ASRQSISSSRIFSSAF. Over residues 38 to 47 the composition is skewed to basic and acidic residues; the sequence is DRLKDDHDAQ. The segment covering 146-156 has biased composition (low complexity); it reads LRSLKPSPKSS. Positions 158–172 are enriched in polar residues; that stretch reads GTETTVQTEPPTSDE. The segment covering 174 to 189 has biased composition (low complexity); it reads SPLASPRRARSATPRA. Polar residues predominate over residues 209–229; that stretch reads ADQPSSSTKGETDGTSEQSCA. Residues 237-284 enclose the GRAM 1 domain; that stretch reads KEMFGFEMPEKVLMEYACSLLQNILLQGYMYVTEGHICFYAYLPRKSA. The PH domain maps to 285–384; that stretch reads VTIRSGYLHK…WVKALQKVIF (100 aa). Disordered stretches follow at residues 457–526 and 560–629; these read MKTS…RQRD and NRSD…VNSS. Polar residues-rich tracts occupy residues 458-473, 483-494, and 560-572; these read KTSQ…TSPA, WSLNSDLSQSRG, and NRSD…TIHT. The segment covering 578–588 has biased composition (basic and acidic residues); the sequence is PSGDRTGRRLS. The span at 604–629 shows a compositional bias: polar residues; that stretch reads RNGQEMQYASSDSDQGTQHPSKVNSS. The GRAM 2 domain maps to 714 to 817; the sequence is RFRAHFALPS…RDDCAVTVHQ (104 aa). 10 residues coordinate UDP-alpha-D-glucose: serine 901, arginine 902, aspartate 904, alanine 1204, histidine 1206, histidine 1219, glycine 1223, threonine 1224, aspartate 1243, and glutamine 1244. A compositionally biased stretch (polar residues) spans 1322 to 1336; that stretch reads VSSTPFSPTPSAKTT. The segment at 1322–1350 is disordered; that stretch reads VSSTPFSPTPSAKTTAEQEEDDVDDSEEW. The span at 1338–1350 shows a compositional bias: acidic residues; sequence EQEEDDVDDSEEW.

It belongs to the glycosyltransferase 28 family.

The protein localises to the cytoplasm. The protein resides in the preautophagosomal structure membrane. It carries out the reaction a sterol + UDP-alpha-D-glucose = a sterol 3-beta-D-glucoside + UDP + H(+). The catalysed reaction is ergosterol + UDP-alpha-D-glucose = ergosteryl 3-beta-D-glucoside + UDP + H(+). Functionally, sterol glycosyltransferase responsible for the glycosylation of ergosterol to form ergosterol-glucoside. Involved in cytoplasm to vacuole transport (Cvt), pexophagy or nonselective autophagy. The protein is Sterol 3-beta-glucosyltransferase of Aspergillus oryzae (strain ATCC 42149 / RIB 40) (Yellow koji mold).